Here is a 381-residue protein sequence, read N- to C-terminus: Cytochrome b (381 aa).

The next 4 helical transmembrane spans lie at 34–54, 78–99, 114–134, and 179–199; these read FGSLLGLCLIIQILTGLFLAM, WLIRNIHANGASLFFICVYLHI, WNIGVILLFLLMATAFVGYVL, and FFAFHFLLPFLILALTIIHLL. 2 residues coordinate heme b: histidine 84 and histidine 98. Residues histidine 183 and histidine 197 each coordinate heme b. Histidine 202 is an a ubiquinone binding site. A run of 4 helical transmembrane segments spans residues 227–247, 289–309, 321–341, and 348–368; these read YKDLLGFFVMIFFLAVFALFM, LGGVLALLFSIFILMLVPLLH, MTQIFFWLLVANSIILTWIGG, and FIMVGQIASISYFSLFLIIMP.

This sequence belongs to the cytochrome b family. The cytochrome bc1 complex contains 3 respiratory subunits (MT-CYB, CYC1 and UQCRFS1), 2 core proteins (UQCRC1 and UQCRC2) and probably 6 low-molecular weight proteins. Heme b is required as a cofactor.

It localises to the mitochondrion inner membrane. Functionally, component of the ubiquinol-cytochrome c reductase complex (complex III or cytochrome b-c1 complex) that is part of the mitochondrial respiratory chain. The b-c1 complex mediates electron transfer from ubiquinol to cytochrome c. Contributes to the generation of a proton gradient across the mitochondrial membrane that is then used for ATP synthesis. This chain is Cytochrome b (mt-cyb), found in Carcharhinus plumbeus (Sandbar shark).